The primary structure comprises 739 residues: Catalase-peroxidase 1 (739 aa).

Residues 1–33 (MPEDRPIEDSPPIGEAQTDAPAGGCPAGFGRIK) form a disordered region. Positions 113-236 (WHAAGTYRVS…LAAVQMGLIY (124 aa)) form a cross-link, tryptophyl-tyrosyl-methioninium (Trp-Tyr) (with M-262). His114 functions as the Proton acceptor in the catalytic mechanism. The tryptophyl-tyrosyl-methioninium (Tyr-Met) (with W-113) cross-link spans 236–262 (YVNPEGPNGNPDPQASAIDIRETFGRM). Heme b is bound at residue His277.

Belongs to the peroxidase family. Peroxidase/catalase subfamily. Homodimer or homotetramer. Heme b serves as cofactor. In terms of processing, formation of the three residue Trp-Tyr-Met cross-link is important for the catalase, but not the peroxidase activity of the enzyme.

It catalyses the reaction H2O2 + AH2 = A + 2 H2O. The enzyme catalyses 2 H2O2 = O2 + 2 H2O. Bifunctional enzyme with both catalase and broad-spectrum peroxidase activity. May play a role in the intracellular survival of mycobacteria. This chain is Catalase-peroxidase 1, found in Mycolicibacterium smegmatis (strain ATCC 700084 / mc(2)155) (Mycobacterium smegmatis).